Consider the following 560-residue polypeptide: Eukaryotic translation initiation factor 3 subunit D-1 (560 aa).

Residues 98 to 166 (VQKPPHQRGR…RGPPPKMRES (69 aa)) are disordered. Basic residues predominate over residues 100 to 121 (KPPHQRGRFRNMRNSRSGRGRN). T128 carries the post-translational modification Phosphothreonine. Residues 147–156 (GRGMGKKFGH) show a composition bias toward basic residues. Residues 291 to 305 (EFDLLTVNESSVEPP) are RNA gate.

Belongs to the eIF-3 subunit D family. As to quaternary structure, component of the eukaryotic translation initiation factor 3 (eIF-3) complex. The eIF-3 complex interacts with pix.

It is found in the cytoplasm. MRNA cap-binding component of the eukaryotic translation initiation factor 3 (eIF-3) complex, which is involved in protein synthesis of a specialized repertoire of mRNAs and, together with other initiation factors, stimulates binding of mRNA and methionyl-tRNAi to the 40S ribosome. The eIF-3 complex specifically targets and initiates translation of a subset of mRNAs involved in cell proliferation. In the eIF-3 complex, eif3d specifically recognizes and binds the 7-methylguanosine cap of a subset of mRNAs. The protein is Eukaryotic translation initiation factor 3 subunit D-1 of Drosophila melanogaster (Fruit fly).